A 364-amino-acid chain; its full sequence is Chaperone protein DnaJ (364 aa).

The J domain occupies Asp4–Gly69. The CR-type zinc finger occupies Gly135–Gln213. Positions 148, 151, 165, 168, 187, 190, 201, and 204 each coordinate Zn(2+). CXXCXGXG motif repeat units lie at residues Cys148 to Lys155, Cys165 to Gly172, Cys187 to Gly194, and Cys201 to Gly208.

This sequence belongs to the DnaJ family. As to quaternary structure, homodimer. Zn(2+) serves as cofactor.

It is found in the cytoplasm. Participates actively in the response to hyperosmotic and heat shock by preventing the aggregation of stress-denatured proteins and by disaggregating proteins, also in an autonomous, DnaK-independent fashion. Unfolded proteins bind initially to DnaJ; upon interaction with the DnaJ-bound protein, DnaK hydrolyzes its bound ATP, resulting in the formation of a stable complex. GrpE releases ADP from DnaK; ATP binding to DnaK triggers the release of the substrate protein, thus completing the reaction cycle. Several rounds of ATP-dependent interactions between DnaJ, DnaK and GrpE are required for fully efficient folding. Also involved, together with DnaK and GrpE, in the DNA replication of plasmids through activation of initiation proteins. The chain is Chaperone protein DnaJ from Borrelia garinii subsp. bavariensis (strain ATCC BAA-2496 / DSM 23469 / PBi) (Borreliella bavariensis).